The chain runs to 655 residues: Tumor necrosis factor receptor superfamily member 21 (655 aa).

An N-terminal signal peptide occupies residues 1 to 41; the sequence is MGTSASSITALASCSRIAGQVGATMVAGSLLLLGFLSTITA. The Extracellular portion of the chain corresponds to 42 to 349; that stretch reads QPEQKTLSLT…PHKHFDINEH (308 aa). TNFR-Cys repeat units lie at residues 50–88, 90–131, 133–167, and 170–211; these read LTGT…LRVC, SCPS…DREC, CPPG…EDVR, and QCAR…DNVC. Disulfide bonds link Cys67–Cys80, Cys70–Cys88, Cys91–Cys106, Cys109–Cys123, Cys113–Cys131, Cys133–Cys144, Cys150–Cys168, Cys171–Cys186, and Cys192–Cys211. N-linked (GlcNAc...) asparagine glycosylation occurs at Asn82. 2 disordered regions span residues 214-306 and 318-338; these read HLSS…GPHH and EATG…HPRQ. Residues 216 to 225 are compositionally biased toward low complexity; it reads SSSSTTPSSP. 2 stretches are compositionally biased toward polar residues: residues 241 to 262 and 276 to 302; these read VPSS…TASV and PDNT…THQQ. N-linked (GlcNAc...) asparagine glycosylation is found at Asn252, Asn278, and Asn289. The chain crosses the membrane as a helical span at residues 350 to 370; it reads LPWMIVLFLLLVLVLIVVCSI. A lipid anchor (S-palmitoyl cysteine) is attached at Cys368. Residues 371 to 655 are Cytoplasmic-facing; that stretch reads RKSSRTLKKG…SVYSHLPDLL (285 aa). In terms of domain architecture, Death spans 415–498; it reads GIDILKLVAA…DVVEKIRGLM (84 aa).

In terms of assembly, associates with TRADD. Interacts with NGFR. Interacts with CASP8. Post-translationally, oxidized in response to reactive oxygen species (ROS), leading to endocytosis. As to expression, detected in brain (at protein level). Detected in corpus callosum oligodendrocytes. Detected in embryonic and adult brain.

The protein localises to the cell membrane. In terms of biological role, promotes apoptosis, possibly via a pathway that involves the activation of NF-kappa-B. Can also promote apoptosis mediated by BAX and by the release of cytochrome c from the mitochondria into the cytoplasm. Trophic-factor deprivation triggers the cleavage of surface APP by beta-secretase to release sAPP-beta which is further cleaved to release an N-terminal fragment of APP (N-APP). Negatively regulates oligodendrocyte survival, maturation and myelination. Plays a role in signaling cascades triggered by stimulation of T-cell receptors, in the adaptive immune response and in the regulation of T-cell differentiation and proliferation. Negatively regulates T-cell responses and the release of cytokines such as IL4, IL5, IL10, IL13 and IFNG by Th2 cells. Negatively regulates the production of IgG, IgM and IgM in response to antigens. May inhibit the activation of JNK in response to T-cell stimulation. Also acts as a regulator of pyroptosis: recruits CASP8 in response to reactive oxygen species (ROS) and subsequent oxidation, leading to activation of GSDMC. The sequence is that of Tumor necrosis factor receptor superfamily member 21 (Tnfrsf21) from Rattus norvegicus (Rat).